A 241-amino-acid polypeptide reads, in one-letter code: Pyridoxine 5'-phosphate synthase (241 aa).

Position 7 (asparagine 7) interacts with 3-amino-2-oxopropyl phosphate. A 1-deoxy-D-xylulose 5-phosphate-binding site is contributed by 9–10 (DH). Arginine 18 is a 3-amino-2-oxopropyl phosphate binding site. The active-site Proton acceptor is histidine 43. Positions 45 and 50 each coordinate 1-deoxy-D-xylulose 5-phosphate. Catalysis depends on glutamate 70, which acts as the Proton acceptor. Threonine 100 provides a ligand contact to 1-deoxy-D-xylulose 5-phosphate. Catalysis depends on histidine 191, which acts as the Proton donor. Residues serine 192 and 213–214 (GH) contribute to the 3-amino-2-oxopropyl phosphate site.

The protein belongs to the PNP synthase family. Homooctamer; tetramer of dimers.

Its subcellular location is the cytoplasm. The catalysed reaction is 3-amino-2-oxopropyl phosphate + 1-deoxy-D-xylulose 5-phosphate = pyridoxine 5'-phosphate + phosphate + 2 H2O + H(+). The protein operates within cofactor biosynthesis; pyridoxine 5'-phosphate biosynthesis; pyridoxine 5'-phosphate from D-erythrose 4-phosphate: step 5/5. Functionally, catalyzes the complicated ring closure reaction between the two acyclic compounds 1-deoxy-D-xylulose-5-phosphate (DXP) and 3-amino-2-oxopropyl phosphate (1-amino-acetone-3-phosphate or AAP) to form pyridoxine 5'-phosphate (PNP) and inorganic phosphate. The protein is Pyridoxine 5'-phosphate synthase of Nitrosomonas eutropha (strain DSM 101675 / C91 / Nm57).